We begin with the raw amino-acid sequence, 72 residues long: Cytochrome b-c1 complex subunit 8-1, mitochondrial (72 aa).

Over Met1–Asn41 the chain is Mitochondrial matrix. Residues Trp42–Tyr58 traverse the membrane as a helical segment. Residues Ala59–Phe72 are Mitochondrial intermembrane-facing.

This sequence belongs to the UQCRQ/QCR8 family. As to quaternary structure, component of the ubiquinol-cytochrome c oxidoreductase (cytochrome b-c1 complex, complex III, CIII), a multisubunit enzyme composed of 10 subunits. The complex is composed of 3 respiratory subunits cytochrome b (MT-CYB), cytochrome c1 (CYC1-1 or CYC1-2) and Rieske protein (UCR1-1 or UCR1-2), 2 core protein subunits MPPalpha1 (or MPPalpha2) and MPPB, and 5 low-molecular weight protein subunits QCR7-1 (or QCR7-2), UCRQ-1 (or UCRQ-2), QCR9, UCRY and probably QCR6-1 (or QCR6-2). The complex exists as an obligatory dimer and forms supercomplexes (SCs) in the inner mitochondrial membrane with NADH-ubiquinone oxidoreductase (complex I, CI), resulting in different assemblies (supercomplexes SCI(1)III(2) and SCI(2)III(4)).

The protein resides in the mitochondrion inner membrane. In terms of biological role, component of the ubiquinol-cytochrome c oxidoreductase, a multisubunit transmembrane complex that is part of the mitochondrial electron transport chain which drives oxidative phosphorylation. The respiratory chain contains 3 multisubunit complexes succinate dehydrogenase (complex II, CII), ubiquinol-cytochrome c oxidoreductase (cytochrome b-c1 complex, complex III, CIII) and cytochrome c oxidase (complex IV, CIV), that cooperate to transfer electrons derived from NADH and succinate to molecular oxygen, creating an electrochemical gradient over the inner membrane that drives transmembrane transport and the ATP synthase. The cytochrome b-c1 complex catalyzes electron transfer from ubiquinol to cytochrome c, linking this redox reaction to translocation of protons across the mitochondrial inner membrane, with protons being carried across the membrane as hydrogens on the quinol. In the process called Q cycle, 2 protons are consumed from the matrix, 4 protons are released into the intermembrane space and 2 electrons are passed to cytochrome c. The chain is Cytochrome b-c1 complex subunit 8-1, mitochondrial (UCRQ-1) from Arabidopsis thaliana (Mouse-ear cress).